We begin with the raw amino-acid sequence, 463 residues long: NADH dehydrogenase [ubiquinone] iron-sulfur protein 2, mitochondrial (463 aa).

A mitochondrion-targeting transit peptide spans M1–G33. K62 is modified (N6-acetyllysine). The residue at position 118 (R118) is a Symmetric dimethylarginine. C326, C332, and C347 together coordinate [4Fe-4S] cluster.

This sequence belongs to the complex I 49 kDa subunit family. In terms of assembly, core subunit of respiratory chain NADH dehydrogenase (Complex I) which is composed of 45 different subunits. Component of the iron-sulfur (IP) fragment of the enzyme. Interacts with NDUFAF3. Interacts with NDUFAF7. Interacts with CERS2. It depends on [4Fe-4S] cluster as a cofactor. Post-translationally, dimethylation at Arg-118 by NDUFAF7 takes place after NDUFS2 assembles into the complex I, leading to stabilize the early intermediate complex.

The protein resides in the mitochondrion inner membrane. It carries out the reaction a ubiquinone + NADH + 5 H(+)(in) = a ubiquinol + NAD(+) + 4 H(+)(out). Functionally, core subunit of the mitochondrial membrane respiratory chain NADH dehydrogenase (Complex I) which catalyzes electron transfer from NADH through the respiratory chain, using ubiquinone as an electron acceptor. Essential for the catalytic activity of complex I. Essential for the assembly of complex I. Redox-sensitive, critical component of the oxygen-sensing pathway in the pulmonary vasculature which plays a key role in acute pulmonary oxygen-sensing and hypoxic pulmonary vasoconstriction. Plays an important role in carotid body sensing of hypoxia. Essential for glia-like neural stem and progenitor cell proliferation, differentiation and subsequent oligodendrocyte or neuronal maturation. The sequence is that of NADH dehydrogenase [ubiquinone] iron-sulfur protein 2, mitochondrial (NDUFS2) from Homo sapiens (Human).